The sequence spans 280 residues: Inner kinetochore subunit fta1 (280 aa).

The protein belongs to the CENP-L/IML3 family. Component of the inner kinetochore constitutive centromere-associated network (CCAN) (also known as central kinetochore Sim4 complex in fission yeast), which is composed of at least cnl2, cnp3, cnp20, fta1, fta2, fta3, fta4, fta6, fta7, mal2, mhf1, mhf2, mis6, mis15, mis17, sim4 and wip1.

The protein resides in the nucleus. The protein localises to the chromosome. It localises to the centromere. Its subcellular location is the kinetochore. In terms of biological role, component of the kinetochore, a multiprotein complex that assembles on centromeric DNA and attaches chromosomes to spindle microtubules, mediating chromosome segregation and sister chromatid segregation during meiosis and mitosis. Component of the inner kinetochore constitutive centromere-associated network (CCAN), which serves as a structural platform for outer kinetochore assembly. The sequence is that of Inner kinetochore subunit fta1 (fta1) from Schizosaccharomyces pombe (strain 972 / ATCC 24843) (Fission yeast).